Here is a 102-residue protein sequence, read N- to C-terminus: NADH-quinone oxidoreductase subunit K (102 aa).

The next 3 membrane-spanning stretches (helical) occupy residues 6 to 26 (MEHG…GLMV), 30 to 50 (ILFV…AFVV), and 62 to 82 (IMFI…LAIL).

This sequence belongs to the complex I subunit 4L family. As to quaternary structure, NDH-1 is composed of 13 different subunits. Subunits NuoA, H, J, K, L, M, N constitute the membrane sector of the complex.

The protein resides in the cell inner membrane. It catalyses the reaction a quinone + NADH + 5 H(+)(in) = a quinol + NAD(+) + 4 H(+)(out). NDH-1 shuttles electrons from NADH, via FMN and iron-sulfur (Fe-S) centers, to quinones in the respiratory chain. The immediate electron acceptor for the enzyme in this species is believed to be ubiquinone. Couples the redox reaction to proton translocation (for every two electrons transferred, four hydrogen ions are translocated across the cytoplasmic membrane), and thus conserves the redox energy in a proton gradient. In Azotobacter vinelandii (strain DJ / ATCC BAA-1303), this protein is NADH-quinone oxidoreductase subunit K.